The sequence spans 132 residues: MSTHDPISDLITRIRNAQMRSKSKVTTPGSKMRASVLEVLKSEGYIRGYATLEHPSGRSEIEIELKYFDGEPVIREIERVSKPGRRVYTSVKNLPRVNNGLGISVLSTPKGIMADHSARDANVGGEVLFTVF.

This sequence belongs to the universal ribosomal protein uS8 family. Part of the 30S ribosomal subunit. Contacts proteins S5 and S12.

One of the primary rRNA binding proteins, it binds directly to 16S rRNA central domain where it helps coordinate assembly of the platform of the 30S subunit. This Bradyrhizobium sp. (strain BTAi1 / ATCC BAA-1182) protein is Small ribosomal subunit protein uS8.